The chain runs to 95 residues: Large ribosomal subunit protein bL25 (95 aa).

It belongs to the bacterial ribosomal protein bL25 family. In terms of assembly, part of the 50S ribosomal subunit; part of the 5S rRNA/L5/L18/L25 subcomplex. Contacts the 5S rRNA. Binds to the 5S rRNA independently of L5 and L18.

In terms of biological role, this is one of the proteins that binds to the 5S RNA in the ribosome where it forms part of the central protuberance. The chain is Large ribosomal subunit protein bL25 from Shewanella putrefaciens (strain CN-32 / ATCC BAA-453).